The chain runs to 851 residues: Internalin J (851 aa).

An N-terminal signal peptide occupies residues 1–25; sequence MKTTKIVIASLVSLTMVSNPLLTFA. LRR repeat units follow at residues 94–115, 116–136, 137–157, 158–179, 180–200, 201–221, 222–243, 244–263, 264–284, 285–306, 316–325, 338–357, 359–368, and 380–402; these read TLTS…EKLT, GLTK…SQNT, NLTY…TPLT, KLTY…QNPL, LTYL…HNTQ, LTEL…TPQT, QLTT…QNKL, LNRL…NQNI, QLTF…TPLT, QLTY…TLSK, DLLEIDLTHN, KIKE…DCQA, GITELDLSQN, and ELTE…NAHI. MucBP domains follow at residues 506-568, 576-638, 647-709, and 717-779; these read PIKG…SQSV, IVAA…AQTV, APEK…SQTV, and IEAA…AQTV. A disordered region spans residues 786 to 825; sequence NTNTDQPLPTKKPTNTTPTKPSNLKTTEVKKASDTLPKTG. The span at 792-811 shows a compositional bias: low complexity; it reads PLPTKKPTNTTPTKPSNLKT. The LPXTG sorting signal signature appears at 821 to 825; that stretch reads LPKTG. Thr-824 carries the pentaglycyl murein peptidoglycan amidated threonine modification. Residues 825–851 constitute a propeptide, removed by sortase A; that stretch reads GDSAPWKSALLGVFLSSTALVIWKKKK.

This sequence belongs to the internalin family. In terms of assembly, nearly full-length mature protein and an internal LRR-containing fragment interact in vitro with human intestinal mucin-2 (MUC2) but not with mucin-1. LRR fragment binding is slightly better at pH 5.5, (the pH of the intestine) than at pH 7.4.

The protein resides in the secreted. It localises to the cell wall. Despite being transcribed during bacterial growth in culture the protein is only detected in infected mice. Its function is as follows. Involved in several steps of L.monocytogenes infection by both intravenous and oral infection. Probably acts as an adhesion; upon ectopic expression in L.innocula bacteria adhere better to human cell lines. In Listeria monocytogenes serovar 1/2a (strain ATCC BAA-679 / EGD-e), this protein is Internalin J (inlJ).